The following is a 249-amino-acid chain: 3-deoxy-D-manno-octulosonic acid kinase (249 aa).

Residue D175 is part of the active site.

This sequence belongs to the protein kinase superfamily. KdkA/RfaP family.

The protein resides in the cell inner membrane. The catalysed reaction is an alpha-Kdo-(2-&gt;6)-lipid IVA + ATP = a 4-O-phospho-alpha-Kdo-(2-&gt;6)-lipid IVA + ADP + H(+). It functions in the pathway bacterial outer membrane biogenesis; LPS core biosynthesis. Functionally, catalyzes the ATP-dependent phosphorylation of the 3-deoxy-D-manno-octulosonic acid (Kdo) residue in Kdo-lipid IV(A) at the 4-OH position. The polypeptide is 3-deoxy-D-manno-octulosonic acid kinase (Xylella fastidiosa (strain M23)).